Consider the following 262-residue polypeptide: 5'-nucleotidase SurE (262 aa).

The a divalent metal cation site is built by Asp-13, Asp-14, Ser-44, and Asn-97.

It belongs to the SurE nucleotidase family. It depends on a divalent metal cation as a cofactor.

It is found in the cytoplasm. The enzyme catalyses a ribonucleoside 5'-phosphate + H2O = a ribonucleoside + phosphate. In terms of biological role, nucleotidase that shows phosphatase activity on nucleoside 5'-monophosphates. The sequence is that of 5'-nucleotidase SurE from Myxococcus xanthus (strain DK1622).